The sequence spans 858 residues: Protein 4.1 (858 aa).

A disordered region spans residues 1–125; the sequence is MTTEKSLAAE…KEIELGNSLD (125 aa). Serine 14 carries the phosphoserine modification. The segment covering 31 to 50 has biased composition (low complexity); sequence QQETQLEEASQAAAAEGSDQ. Phosphothreonine is present on threonine 62. Over residues 63-77 the composition is skewed to basic and acidic residues; the sequence is PTHEDLTKNKERTSE. The segment covering 78-89 has biased composition (low complexity); that stretch reads SRGLSRLLSSFL. Phosphoserine is present on residues serine 86, serine 87, serine 97, serine 106, serine 123, serine 151, serine 153, and serine 154. Basic and acidic residues predominate over residues 103–119; sequence EVESEKEKGEGGQKEIE. The tract at residues 155–208 is disordered; the sequence is IETQPAQEEHREDPDSETKEGEGIEECSGTEVKEDPESRAEREPEASQKPVRRH. 2 stretches are compositionally biased toward basic and acidic residues: residues 161–176 and 185–200; these read QEEHREDPDSETKEGE and EVKEDPESRAEREPEA. Phosphoserine is present on serine 192. The FERM domain occupies 211 to 492; sequence MHCKVSLLDD…EHHTFFRLTS (282 aa). At tyrosine 223 the chain carries Phosphotyrosine. Position 379 is a phosphothreonine (threonine 379). The tract at residues 495–608 is hydrophilic; that stretch reads TIPKSKFLAL…PAEPEPTEAW (114 aa). The segment at 518-636 is disordered; it reads TRQASALIDR…TQKLAGKGED (119 aa). Serine 522, serine 541, serine 543, and serine 556 each carry phosphoserine. Composition is skewed to basic and acidic residues over residues 581-595 and 606-615; these read TPKEAVKVEEKRGEE and EAWKVEKTHT. Positions 609 to 707 are spectrin--actin-binding; the sequence is KVEKTHTEVT…WDKRLSTHSP (99 aa). The span at 616-629 shows a compositional bias: polar residues; it reads EVTVPTSNGDQTQK. The residue at position 654 (tyrosine 654) is a Phosphotyrosine. Serine 658, serine 668, serine 678, serine 703, and serine 706 each carry phosphoserine. The C-terminal (CTD) stretch occupies residues 710-858; sequence TLNINGQVPT…VHQETEISEE (149 aa). Phosphothreonine occurs at positions 730 and 853.

Binds with a high affinity to glycophorin and with lower affinity to band III protein. Associates with the nuclear mitotic apparatus. Binds calmodulin, CPAP and DLG1. Also found to associate with contractile apparatus and tight junctions. Interacts with NUMA1; this interaction is negatively regulated by CDK1 during metaphase and promotes anaphase-specific localization of NUMA1 in symmetrically dividing cells. Interacts with ATP2B1; regulates small intestinal calcium absorption through regulation of membrane expression of ATP2B1. Post-translationally, O-glycosylated; contains N-acetylglucosamine side chains in the C-terminal domain. Phosphorylated at multiple sites by different protein kinases and each phosphorylation event selectively modulates the protein's functions. In terms of processing, phosphorylation on Tyr-654 reduces the ability of 4.1 to promote the assembly of the spectrin/actin/4.1 ternary complex.

The protein resides in the nucleus. The protein localises to the cytoplasm. It localises to the cytoskeleton. It is found in the cell cortex. Functionally, protein 4.1 is a major structural element of the erythrocyte membrane skeleton. It plays a key role in regulating membrane physical properties of mechanical stability and deformability by stabilizing spectrin-actin interaction. Recruits DLG1 to membranes. Required for dynein-dynactin complex and NUMA1 recruitment at the mitotic cell cortex during anaphase. This chain is Protein 4.1, found in Mus musculus (Mouse).